The sequence spans 614 residues: Probable glutamate--tRNA ligase, cytoplasmic (614 aa).

130 to 132 lines the L-glutamate pocket; that stretch reads RFA. The short motif at 135-144 is the 'HIGH' region element; sequence PSGCLHIGHL. Residue histidine 140 coordinates ATP. L-glutamate-binding positions include aspartate 166, 303-307, and arginine 321; that span reads YDFVC. Residues glutamate 324 and 359 to 363 each bind ATP; that span reads VLSKR. A 'KMSKS' region motif is present at residues 359–363; that stretch reads VLSKR.

Belongs to the class-I aminoacyl-tRNA synthetase family. Glutamate--tRNA ligase type 2 subfamily.

Its subcellular location is the cytoplasm. The catalysed reaction is tRNA(Glu) + L-glutamate + ATP = L-glutamyl-tRNA(Glu) + AMP + diphosphate. This is Probable glutamate--tRNA ligase, cytoplasmic from Vairimorpha ceranae (strain BRL01) (Microsporidian parasite).